The primary structure comprises 169 residues: Ribosomal RNA large subunit methyltransferase H (169 aa).

S-adenosyl-L-methionine is bound by residues leucine 85, glycine 117, and 136 to 141; that span reads LGELTW.

This sequence belongs to the RNA methyltransferase RlmH family. As to quaternary structure, homodimer.

It is found in the cytoplasm. It catalyses the reaction pseudouridine(1915) in 23S rRNA + S-adenosyl-L-methionine = N(3)-methylpseudouridine(1915) in 23S rRNA + S-adenosyl-L-homocysteine + H(+). Specifically methylates the pseudouridine at position 1915 (m3Psi1915) in 23S rRNA. The chain is Ribosomal RNA large subunit methyltransferase H from Brucella abortus biovar 1 (strain 9-941).